The chain runs to 715 residues: Fatty acid oxidation complex subunit alpha (715 aa).

The tract at residues 1-190 (MTTTSAFMLN…RAGLVDDVVP (190 aa)) is enoyl-CoA hydratase. The segment at 306–715 (GPLNSVGILG…WTNGETDQGN (410 aa)) is 3-hydroxyacyl-CoA dehydrogenase.

This sequence in the N-terminal section; belongs to the enoyl-CoA hydratase/isomerase family. The protein in the central section; belongs to the 3-hydroxyacyl-CoA dehydrogenase family. In terms of assembly, heterotetramer of two alpha chains (FadJ) and two beta chains (FadI).

It localises to the cytoplasm. It catalyses the reaction a (3S)-3-hydroxyacyl-CoA = a (2E)-enoyl-CoA + H2O. The enzyme catalyses a 4-saturated-(3S)-3-hydroxyacyl-CoA = a (3E)-enoyl-CoA + H2O. It carries out the reaction a (3S)-3-hydroxyacyl-CoA + NAD(+) = a 3-oxoacyl-CoA + NADH + H(+). The catalysed reaction is (3S)-3-hydroxybutanoyl-CoA = (3R)-3-hydroxybutanoyl-CoA. Its pathway is lipid metabolism; fatty acid beta-oxidation. Its function is as follows. Catalyzes the formation of a hydroxyacyl-CoA by addition of water on enoyl-CoA. Also exhibits 3-hydroxyacyl-CoA epimerase and 3-hydroxyacyl-CoA dehydrogenase activities. In Salmonella schwarzengrund (strain CVM19633), this protein is Fatty acid oxidation complex subunit alpha.